A 251-amino-acid polypeptide reads, in one-letter code: 4-hydroxy-tetrahydrodipicolinate reductase (251 aa).

Residues 8-13, 76-78, and 106-109 contribute to the NAD(+) site; these read GAKGRM, GTT, and APNF. Residue histidine 136 is the Proton donor/acceptor of the active site. Histidine 137 contributes to the (S)-2,3,4,5-tetrahydrodipicolinate binding site. Lysine 140 acts as the Proton donor in catalysis. (S)-2,3,4,5-tetrahydrodipicolinate is bound at residue 146–147; that stretch reads GT.

It belongs to the DapB family.

The protein localises to the cytoplasm. It carries out the reaction (S)-2,3,4,5-tetrahydrodipicolinate + NAD(+) + H2O = (2S,4S)-4-hydroxy-2,3,4,5-tetrahydrodipicolinate + NADH + H(+). It catalyses the reaction (S)-2,3,4,5-tetrahydrodipicolinate + NADP(+) + H2O = (2S,4S)-4-hydroxy-2,3,4,5-tetrahydrodipicolinate + NADPH + H(+). Its pathway is amino-acid biosynthesis; L-lysine biosynthesis via DAP pathway; (S)-tetrahydrodipicolinate from L-aspartate: step 4/4. Catalyzes the conversion of 4-hydroxy-tetrahydrodipicolinate (HTPA) to tetrahydrodipicolinate. The polypeptide is 4-hydroxy-tetrahydrodipicolinate reductase (Bifidobacterium longum subsp. infantis (strain ATCC 15697 / DSM 20088 / JCM 1222 / NCTC 11817 / S12)).